The chain runs to 265 residues: Indole-3-glycerol phosphate synthase (265 aa).

The protein belongs to the TrpC family.

It catalyses the reaction 1-(2-carboxyphenylamino)-1-deoxy-D-ribulose 5-phosphate + H(+) = (1S,2R)-1-C-(indol-3-yl)glycerol 3-phosphate + CO2 + H2O. It functions in the pathway amino-acid biosynthesis; L-tryptophan biosynthesis; L-tryptophan from chorismate: step 4/5. This is Indole-3-glycerol phosphate synthase from Xanthomonas oryzae pv. oryzae (strain PXO99A).